A 211-amino-acid chain; its full sequence is Receptor expression-enhancing protein 6 (211 aa).

A run of 2 helical transmembrane segments spans residues 44 to 64 (LSLYLLFGYGASLLCNLIGFV) and 89 to 109 (WVVYALFGLAEFFSDLLLSWF). The disordered stretch occupies residues 190-211 (AGPSTPLEADLKPSQTPQPKDK). Positions 202-211 (PSQTPQPKDK) are enriched in polar residues.

This sequence belongs to the DP1 family. In terms of assembly, interacts with STX3. Interacts with clathrin. As to expression, expressed in circumvallate papillae and testis. Expressed in the retina. Isoform 1 is predominantly present in mature optic cups. Isoform 1 expression is confined to the cell body and inner segment of developing rod photoreceptor cells.

Its subcellular location is the endoplasmic reticulum membrane. The protein localises to the cytoplasmic vesicle. It localises to the clathrin-coated vesicle membrane. Functionally, required for correct function and survival of retinal photoreceptors. Required for retinal development. In rod photoreceptors, facilitates stability and/or trafficking of guanylate cyclases and is required to maintain endoplasmic reticulum and mitochondrial homeostasis. May play a role in clathrin-coated intracellular vesicle trafficking of proteins from the endoplasmic reticulum to the retinal rod plasma membrane. This chain is Receptor expression-enhancing protein 6 (REEP6), found in Homo sapiens (Human).